Reading from the N-terminus, the 67-residue chain is Conotoxin Cal14.2c (67 aa).

Residues 1 to 20 (MNVTVMFLVLLLLTMPLTDG) form the signal peptide. Positions 21-48 (FNIRATNGGELFGPVQRDAGNVLDHGFQ) are excised as a propeptide.

The protein belongs to the conotoxin L superfamily. In terms of processing, contains 2 disulfide bonds. As to expression, expressed by the venom duct.

The protein resides in the secreted. Probable neurotoxin with unknown target. Possibly targets ion channels. This is Conotoxin Cal14.2c from Californiconus californicus (California cone).